A 287-amino-acid polypeptide reads, in one-letter code: Polyamine aminopropyltransferase (287 aa).

One can recognise a PABS domain in the interval 5-238 (EIWYETLHAN…GIMTFAWASN (234 aa)). Residue Q33 participates in S-methyl-5'-thioadenosine binding. The spermidine site is built by H64 and D88. S-methyl-5'-thioadenosine is bound by residues E108 and 140 to 141 (DG). The Proton acceptor role is filled by D158. 158–161 (DCTD) contributes to the spermidine binding site. Residue P165 participates in S-methyl-5'-thioadenosine binding.

This sequence belongs to the spermidine/spermine synthase family. In terms of assembly, homodimer or homotetramer.

The protein resides in the cytoplasm. The enzyme catalyses S-adenosyl 3-(methylsulfanyl)propylamine + putrescine = S-methyl-5'-thioadenosine + spermidine + H(+). It functions in the pathway amine and polyamine biosynthesis; spermidine biosynthesis; spermidine from putrescine: step 1/1. Catalyzes the irreversible transfer of a propylamine group from the amino donor S-adenosylmethioninamine (decarboxy-AdoMet) to putrescine (1,4-diaminobutane) to yield spermidine. The protein is Polyamine aminopropyltransferase of Pectobacterium atrosepticum (strain SCRI 1043 / ATCC BAA-672) (Erwinia carotovora subsp. atroseptica).